The chain runs to 206 residues: dITP/XTP pyrophosphatase (206 aa).

7–12 (SSHGYK) contacts substrate. The Proton acceptor role is filled by Asp-70. Mg(2+) is bound at residue Asp-70. Substrate contacts are provided by residues Thr-71, 154–157 (FGYD), Lys-177, and 182–183 (HR).

It belongs to the HAM1 NTPase family. As to quaternary structure, homodimer. The cofactor is Mg(2+).

It carries out the reaction XTP + H2O = XMP + diphosphate + H(+). It catalyses the reaction dITP + H2O = dIMP + diphosphate + H(+). The enzyme catalyses ITP + H2O = IMP + diphosphate + H(+). In terms of biological role, pyrophosphatase that catalyzes the hydrolysis of nucleoside triphosphates to their monophosphate derivatives, with a high preference for the non-canonical purine nucleotides XTP (xanthosine triphosphate), dITP (deoxyinosine triphosphate) and ITP. Seems to function as a house-cleaning enzyme that removes non-canonical purine nucleotides from the nucleotide pool, thus preventing their incorporation into DNA/RNA and avoiding chromosomal lesions. In Chlamydia abortus (strain DSM 27085 / S26/3) (Chlamydophila abortus), this protein is dITP/XTP pyrophosphatase.